We begin with the raw amino-acid sequence, 318 residues long: tRNA-cytidine(32) 2-sulfurtransferase (318 aa).

The interval 1–29 (MNHVSSTKPDTAPSKHLTSSHIDATDQNN) is disordered. A compositionally biased stretch (polar residues) spans 16–27 (HLTSSHIDATDQ). The PP-loop motif signature appears at 64–69 (SGGKDS). 3 residues coordinate [4Fe-4S] cluster: Cys139, Cys142, and Cys230.

This sequence belongs to the TtcA family. Homodimer. It depends on Mg(2+) as a cofactor. The cofactor is [4Fe-4S] cluster.

The protein resides in the cytoplasm. It catalyses the reaction cytidine(32) in tRNA + S-sulfanyl-L-cysteinyl-[cysteine desulfurase] + AH2 + ATP = 2-thiocytidine(32) in tRNA + L-cysteinyl-[cysteine desulfurase] + A + AMP + diphosphate + H(+). The protein operates within tRNA modification. In terms of biological role, catalyzes the ATP-dependent 2-thiolation of cytidine in position 32 of tRNA, to form 2-thiocytidine (s(2)C32). The sulfur atoms are provided by the cysteine/cysteine desulfurase (IscS) system. This Pseudoalteromonas atlantica (strain T6c / ATCC BAA-1087) protein is tRNA-cytidine(32) 2-sulfurtransferase.